The primary structure comprises 386 residues: GTPase Obg (386 aa).

The Obg domain occupies 1–159; the sequence is MKFIDEARIE…RTLKLELKVL (159 aa). In terms of domain architecture, OBG-type G spans 160 to 348; the sequence is ADVGLLGMPN…LTFAIMSYLD (189 aa). GTP is bound by residues 166 to 173, 191 to 195, 213 to 216, 284 to 287, and 329 to 331; these read GMPNAGKS, FTTLH, DIPG, NKVD, and SAL. Mg(2+) is bound by residues serine 173 and threonine 193.

The protein belongs to the TRAFAC class OBG-HflX-like GTPase superfamily. OBG GTPase family. In terms of assembly, monomer. Mg(2+) is required as a cofactor.

The protein resides in the cytoplasm. In terms of biological role, an essential GTPase which binds GTP, GDP and possibly (p)ppGpp with moderate affinity, with high nucleotide exchange rates and a fairly low GTP hydrolysis rate. Plays a role in control of the cell cycle, stress response, ribosome biogenesis and in those bacteria that undergo differentiation, in morphogenesis control. The chain is GTPase Obg from Chromobacterium violaceum (strain ATCC 12472 / DSM 30191 / JCM 1249 / CCUG 213 / NBRC 12614 / NCIMB 9131 / NCTC 9757 / MK).